A 338-amino-acid chain; its full sequence is 1-aminocyclopropane-1-carboxylate deaminase (338 aa).

Lysine 51 carries the post-translational modification N6-(pyridoxal phosphate)lysine. Serine 78 serves as the catalytic Nucleophile.

The protein belongs to the ACC deaminase/D-cysteine desulfhydrase family. In terms of assembly, homotrimer. It depends on pyridoxal 5'-phosphate as a cofactor.

The catalysed reaction is 1-aminocyclopropane-1-carboxylate + H2O = 2-oxobutanoate + NH4(+). In terms of biological role, catalyzes a cyclopropane ring-opening reaction, the irreversible conversion of 1-aminocyclopropane-1-carboxylate (ACC) to ammonia and alpha-ketobutyrate. Allows growth on ACC as a nitrogen source. This chain is 1-aminocyclopropane-1-carboxylate deaminase, found in Burkholderia cenocepacia (strain ATCC BAA-245 / DSM 16553 / LMG 16656 / NCTC 13227 / J2315 / CF5610) (Burkholderia cepacia (strain J2315)).